The primary structure comprises 317 residues: L-lactate dehydrogenase (317 aa).

Residues valine 16, aspartate 37, lysine 42, tyrosine 68, and 82 to 83 (GA) each bind NAD(+). Substrate is bound by residues glutamine 85 and arginine 91. NAD(+) contacts are provided by residues threonine 104, 121 to 123 (ATN), and serine 146. 123 to 126 (NPVD) lines the substrate pocket. 151–154 (DTAR) contributes to the substrate binding site. Residues arginine 156 and histidine 171 each coordinate beta-D-fructose 1,6-bisphosphate. The active-site Proton acceptor is histidine 178. Tyrosine 222 carries the phosphotyrosine modification. Position 231 (threonine 231) interacts with substrate.

Belongs to the LDH/MDH superfamily. LDH family. As to quaternary structure, homotetramer.

It is found in the cytoplasm. The enzyme catalyses (S)-lactate + NAD(+) = pyruvate + NADH + H(+). It functions in the pathway fermentation; pyruvate fermentation to lactate; (S)-lactate from pyruvate: step 1/1. Its activity is regulated as follows. Allosterically activated by fructose 1,6-bisphosphate (FBP). In terms of biological role, catalyzes the conversion of lactate to pyruvate. In Corynebacterium efficiens (strain DSM 44549 / YS-314 / AJ 12310 / JCM 11189 / NBRC 100395), this protein is L-lactate dehydrogenase.